We begin with the raw amino-acid sequence, 225 residues long: Receptor-transporting protein 2 (225 aa).

Residues 1–196 (MCTSLTTCEW…RAQAGSGYNF (196 aa)) are Cytoplasmic-facing. Residues 52-161 (ASGRFHCSWC…AEFCEACQEG (110 aa)) form a 3CxxC-type zinc finger. The helical transmembrane segment at 197-219 (LSLRWCLFWASLCLLVVYLQFSF) threads the bilayer. At 220 to 225 (LSPAFF) the chain is on the extracellular side.

This sequence belongs to the TMEM7 family. In terms of assembly, interacts with olfactory receptors. As to expression, expressed in circumvallate papillae and testis.

Its subcellular location is the cell membrane. Functionally, specifically promotes functional cell surface expression of olfactory receptors, but not of other GPCRs. This is Receptor-transporting protein 2 (RTP2) from Homo sapiens (Human).